Reading from the N-terminus, the 545-residue chain is uncharacterized protein (545 aa).

Disordered stretches follow at residues 1–162 (MSSG…DPQE) and 200–250 (YPPV…EPPP). Residues 86–100 (NYRSHSSADYLTPNS) show a composition bias toward polar residues. 2 stretches are compositionally biased toward low complexity: residues 109 to 128 (TTPR…TATK) and 141 to 152 (SGASTSSGTSST). 2 stretches are compositionally biased toward polar residues: residues 212–221 (SSRTGTLQRT) and 228–244 (ISST…QMQS). Residues 458–540 (RVLVEKMMPG…VTITLLPAVG (83 aa)) form the PDZ domain.

This is an uncharacterized protein from Caenorhabditis elegans.